A 116-amino-acid chain; its full sequence is Flagellar transcriptional regulator FlhD (116 aa).

It belongs to the FlhD family. In terms of assembly, homodimer; disulfide-linked. Forms a heterohexamer composed of two FlhC and four FlhD subunits. Each FlhC binds a FlhD dimer, forming a heterotrimer, and a hexamer assembles by dimerization of two heterotrimers.

Its subcellular location is the cytoplasm. Functions in complex with FlhC as a master transcriptional regulator that regulates transcription of several flagellar and non-flagellar operons by binding to their promoter region. Activates expression of class 2 flagellar genes, including fliA, which is a flagellum-specific sigma factor that turns on the class 3 genes. Also regulates genes whose products function in a variety of physiological pathways. This chain is Flagellar transcriptional regulator FlhD, found in Escherichia coli O157:H7.